Here is a 261-residue protein sequence, read N- to C-terminus: Taurine import ATP-binding protein TauB (261 aa).

One can recognise an ABC transporter domain in the interval 4-233 (LQLEGIGAHY…RYSAGESARA (230 aa)). 38–45 (GPSGSGKT) serves as a coordination point for ATP.

It belongs to the ABC transporter superfamily. Taurine importer (TC 3.A.1.17.1) family. In terms of assembly, the complex is composed of two ATP-binding proteins (TauB), two transmembrane proteins (TauC) and a solute-binding protein (TauA).

It localises to the cell inner membrane. The enzyme catalyses taurine(out) + ATP + H2O = taurine(in) + ADP + phosphate + H(+). In terms of biological role, part of the ABC transporter complex TauABC involved in taurine import. Responsible for energy coupling to the transport system. This is Taurine import ATP-binding protein TauB from Pseudomonas syringae pv. tomato (strain ATCC BAA-871 / DC3000).